Here is a 257-residue protein sequence, read N- to C-terminus: Hydroxyethylthiazole kinase (257 aa).

A substrate-binding site is contributed by methionine 49. 2 residues coordinate ATP: arginine 124 and threonine 170. Position 197 (glycine 197) interacts with substrate.

It belongs to the Thz kinase family. Mg(2+) serves as cofactor.

The catalysed reaction is 5-(2-hydroxyethyl)-4-methylthiazole + ATP = 4-methyl-5-(2-phosphooxyethyl)-thiazole + ADP + H(+). It participates in cofactor biosynthesis; thiamine diphosphate biosynthesis; 4-methyl-5-(2-phosphoethyl)-thiazole from 5-(2-hydroxyethyl)-4-methylthiazole: step 1/1. Catalyzes the phosphorylation of the hydroxyl group of 4-methyl-5-beta-hydroxyethylthiazole (THZ). This is Hydroxyethylthiazole kinase from Klebsiella pneumoniae subsp. pneumoniae (strain ATCC 700721 / MGH 78578).